The chain runs to 1005 residues: Ephrin type-A receptor 8 (1005 aa).

Positions 1–27 (MAPARGRLPPALWVVTAAAAAATCVSA) are cleaved as a signal peptide. Residues 28 to 542 (ARGEVNLLDT…KPRPRYDTRT (515 aa)) lie on the Extracellular side of the membrane. The 179-residue stretch at 31–209 (EVNLLDTSTI…YYKKCPAMVR (179 aa)) folds into the Eph LBD domain. Fibronectin type-III domains follow at residues 328–438 (PPSA…TNQA) and 439–534 (APSQ…TGKP). Asn340, Asn407, and Asn432 each carry an N-linked (GlcNAc...) asparagine glycan. A helical membrane pass occupies residues 543–563 (IVWICLTLITGLVVLLLLLIC). Residues 564–570 (KKRHCGY) form a mediates interaction with ANKS1A and ANKS1B region. Topologically, residues 564-1005 (KKRHCGYSKA…TSTQGPRRHL (442 aa)) are cytoplasmic. Positions 589-644 (APPPVFLPLHHPPGKLPEPQFYAEPHTYEEPGRAGRSFTREIEASRIHIEKIIGSG) are mediates interaction with PIK3CG and required for endocytosis. Tyr616 carries the post-translational modification Phosphotyrosine; by autocatalysis. The region spanning 635-896 (IHIEKIIGSG…QIVSVLDALI (262 aa)) is the Protein kinase domain. ATP contacts are provided by residues 641–649 (IGSGDSGEV) and Lys667. The active-site Proton acceptor is the Asp760. Position 839 is a phosphotyrosine; by autocatalysis (Tyr839). In terms of domain architecture, SAM spans 930–994 (GGGLTVGDWL…LGSIQTMRAQ (65 aa)). Residues 1003 to 1005 (RHL) carry the PDZ-binding motif.

The protein belongs to the protein kinase superfamily. Tyr protein kinase family. Ephrin receptor subfamily. Heterotetramer upon binding of the ligand. The heterotetramer is composed of an ephrin dimer and a receptor dimer. Oligomerization is probably required to induce biological responses. May also form heterodimers with other ephrin receptors. Interacts with FYN; possible downstream effector of EPHA8 in regulation of cell adhesion. Interacts with PIK3CG; regulates integrin-mediated cell adhesion to substrate. Interacts with TIAM1; regulates clathrin-mediated endocytosis of EPHA8. Interacts with ANKS1A and ANKS1B; EPHA8 kinase activity-independent but stimulated by EPHA8 ubiquitination. In terms of processing, phosphorylated. Phosphorylation is stimulated upon binding of its ligands including EFNA2, EFNA3 and EFNA5. Autophosphorylation on Tyr-616 is critical for association with FYN. Autophosphorylation on Tyr-839 modulates tyrosine kinase activity. Post-translationally, ubiquitinated. Ubiquitination by CBL regulates the receptor stability and activity through proteasomal degradation. ANKS1A prevents ubiquitination and degradation.

It is found in the cell membrane. It localises to the cell projection. The protein resides in the early endosome membrane. It carries out the reaction L-tyrosyl-[protein] + ATP = O-phospho-L-tyrosyl-[protein] + ADP + H(+). Receptor tyrosine kinase which binds promiscuously GPI-anchored ephrin-A family ligands residing on adjacent cells, leading to contact-dependent bidirectional signaling into neighboring cells. The signaling pathway downstream of the receptor is referred to as forward signaling while the signaling pathway downstream of the ephrin ligand is referred to as reverse signaling. The GPI-anchored ephrin-A EFNA2, EFNA3, and EFNA5 are able to activate EPHA8 through phosphorylation. With EFNA5 may regulate integrin-mediated cell adhesion and migration on fibronectin substrate but also neurite outgrowth. During development of the nervous system also plays a role in axon guidance. Downstream effectors of the EPHA8 signaling pathway include FYN which promotes cell adhesion upon activation by EPHA8 and the MAP kinases in the stimulation of neurite outgrowth. This chain is Ephrin type-A receptor 8 (EPHA8), found in Homo sapiens (Human).